The primary structure comprises 251 residues: Membrane-anchored junction protein (251 aa).

The Nuclear portion of the chain corresponds to 1–227 (MSLKPFTYPF…HSNPPPLKEP (227 aa)). A disordered region spans residues 140-225 (RKRKLMEEPS…LEHSNPPPLK (86 aa)). Polar residues predominate over residues 183 to 198 (EDSQQDTPASDSTAVT). A helical membrane pass occupies residues 228–246 (AARGFLGFLSALFPFRYFF). The Perinuclear space segment spans residues 247-251 (RKSTQ).

The protein belongs to the MAJIN family. Component of the MAJIN-TERB1-TERB2 complex, composed of MAJIN, TERB1 and TERB2.

The protein localises to the nucleus inner membrane. It is found in the chromosome. It localises to the telomere. In terms of biological role, meiosis-specific telomere-associated protein involved in meiotic telomere attachment to the nucleus inner membrane, a crucial step for homologous pairing and synapsis. Component of the MAJIN-TERB1-TERB2 complex, which promotes telomere cap exchange by mediating attachment of telomeric DNA to the inner nuclear membrane and replacement of the protective cap of telomeric chromosomes: in early meiosis, the MAJIN-TERB1-TERB2 complex associates with telomeric DNA and the shelterin/telosome complex. During prophase, the complex matures and promotes release of the shelterin/telosome complex from telomeric DNA. In the complex, MAJIN acts as the anchoring subunit to the nucleus inner membrane. MAJIN shows DNA-binding activity, possibly for the stabilization of telomere attachment on the nucleus inner membrane. The chain is Membrane-anchored junction protein from Rattus norvegicus (Rat).